The primary structure comprises 707 residues: Acyl-CoA ligase 891, peroxisomal (707 aa).

259-270 (INYTSGTTGPPK) contributes to the ATP binding site. The fatty acid-binding stretch occupies residues 525 to 549 (DGWFRTGDVCTIDEKGRFIIIDRRK). The short motif at 705–707 (AKL) is the Peroxisome targeting signal element.

It belongs to the ATP-dependent AMP-binding enzyme family.

The protein localises to the peroxisome matrix. The catalysed reaction is (4E,8E)-10-(4-hydroxy-6-methoxy-7-methyl-3-oxo-1,3-dihydro-2-benzofuran-5-yl)-4,8-dimethyldeca-4,8-dienoate + ATP + CoA = (4E,8E)-10-(4-hydroxy-6-methoxy-7-methyl-3-oxo-1,3-dihydro-2-benzofuran-5-yl)-4,8-dimethyldeca-4,8-dienoyl-CoA + AMP + diphosphate. It functions in the pathway secondary metabolite biosynthesis; terpenoid biosynthesis. In terms of biological role, acyl-CoA ligase involved in the biosynthesis of mycophenolic acid (MPA), the first isolated antibiotic natural product in the world obtained from a culture of Penicillium brevicompactum in 1893. The peroxisomal acyl-CoA ligase 891 converts the intermediate MFDHMP-3C into MFDHMP-3C-CoA which impairs its diffusion from the peroxisome. The first step of the pathway is the synthesis of 5-methylorsellinic acid (5MOA) by the cytosolic polyketide synthase mpaC. 5MOA is then converted to the phthalide compound 5,7-dihydroxy-4,6-dimethylphthalide (DHMP) by the endoplasmic reticulum-bound cytochrome P450 monooxygenase mpaDE. MpaDE first catalyzes hydroxylation of 5-MOA to 4,6-dihydroxy-2-(hydroxymethyl)-3-methylbenzoic acid (DHMB). MpaDE then acts as a lactone synthase that catalyzes the ring closure to convert DHMB into DHMP. The next step is the prenylation of DHMP by the Golgi apparatus-associated prenyltransferase mpaA to yield farnesyl-DHMP (FDHMP). The ER-bound oxygenase mpaB then mediates the oxidative cleavage the C19-C20 double bond in FDHMP to yield FDHMP-3C via a mycophenolic aldehyde intermediate. The O-methyltransferase mpaG catalyzes the methylation of FDHMP-3C to yield MFDHMP-3C. After the cytosolic methylation of FDHMP-3C, MFDHMP-3C enters into peroxisomes probably via free diffusion due to its low molecular weight. Upon a peroxisomal CoA ligation reaction, catalyzed by a beta-oxidation component enzyme acyl-CoA ligase ACL891, MFDHMP-3C-CoA would then be restricted to peroxisomes for the following beta-oxidation pathway steps. The peroxisomal beta-oxidation machinery than converts MFDHMP-3C-CoA into MPA_CoA, via a beta-oxidation chain-shortening process. Finally mpaH acts as a peroxisomal acyl-CoA hydrolase with high substrate specificity toward MPA-CoA to release the final product MPA. This chain is Acyl-CoA ligase 891, peroxisomal, found in Penicillium roqueforti (strain FM164).